The primary structure comprises 355 residues: Sorbitol dehydrogenase (355 aa).

Alanine 2 is modified (N-acetylalanine). Residue cysteine 43 coordinates Zn(2+). Tyrosine 49 contributes to the substrate binding site. Positions 68 and 69 each coordinate Zn(2+). Substrate is bound at residue glutamate 154. NAD(+)-binding positions include isoleucine 182, aspartate 202, arginine 207, 271-273 (VGL), and 295-297 (IFR). Residues arginine 297 and tyrosine 298 each coordinate substrate.

It belongs to the zinc-containing alcohol dehydrogenase family. As to quaternary structure, homotetramer. The cofactor is Zn(2+). As to expression, expressed in liver.

The protein resides in the mitochondrion membrane. It localises to the cell projection. The protein localises to the cilium. Its subcellular location is the flagellum. The catalysed reaction is keto-D-fructose + NADH + H(+) = D-sorbitol + NAD(+). Its function is as follows. Polyol dehydrogenase that catalyzes the reversible NAD(+)-dependent oxidation of various sugar alcohols. Is active with D-sorbitol (D-glucitol) as substrate, leading to the C2-oxidized product D-fructose. Is a key enzyme in the polyol pathway that interconverts glucose and fructose via sorbitol, which constitutes an important alternate route for glucose metabolism. This is Sorbitol dehydrogenase (SORD) from Gallus gallus (Chicken).